The primary structure comprises 88 residues: MSSRGSGANAASRQSMTASGGAVKARQLAHLHSQLTQLSHNLATTENLMRMTAVQAEAMRGLGSWHAGLFMAASKVLGEESVQNQQGN.

Residues 1–15 (MSSRGSGANAASRQS) show a composition bias toward low complexity. The tract at residues 1 to 24 (MSSRGSGANAASRQSMTASGGAVK) is disordered.

Belongs to the DASH complex HSK3 family. Component of the DASH complex consisting of ASK1, DAD1, DAD2, DAD3, DAD4, DAM1, DUO1, HSK3, SPC19 and SPC34, with a stoichiometry of one copy of each subunit per complex. Multiple DASH complexes oligomerize to form a ring that encircles spindle microtubules and organizes the rod-like NDC80 complexes of the outer kinetochore. DASH complex oligomerization strengthens microtubule attachments. On cytoplasmic microtubules, DASH complexes appear to form patches instead of rings.

The protein resides in the nucleus. It is found in the cytoplasm. The protein localises to the cytoskeleton. It localises to the spindle. Its subcellular location is the chromosome. The protein resides in the centromere. It is found in the kinetochore. Component of the DASH complex that connects microtubules with kinetochores and couples microtubule depolymerisation to chromosome movement; it is involved in retrieving kinetochores to the spindle poles before their re-orientation on the spindle in early mitosis and allows microtubule depolymerization to pull chromosomes apart and resist detachment during anaphase. Kinetochores, consisting of a centromere-associated inner segment and a microtubule-contacting outer segment, play a crucial role in chromosome segregation by mediating the physical connection between centromeric DNA and microtubules. Kinetochores also serve as an input point for the spindle assembly checkpoint, which delays anaphase until all chromosomes have bioriented on the mitotic spindle. The sequence is that of DASH complex subunit HSK3 from Chaetomium thermophilum (strain DSM 1495 / CBS 144.50 / IMI 039719) (Thermochaetoides thermophila).